The primary structure comprises 302 residues: Giardin subunit alpha-5 (302 aa).

Annexin repeat units lie at residues 1 to 72 (MTST…VNMW), 74 to 144 (SRHE…VAGW), 153 to 226 (GSVE…AAHF), and 230 to 298 (GLPV…TLWR).

Belongs to the annexin family. Giardin subunit alpha subfamily.

It localises to the cytoplasm. The protein resides in the cytoskeleton. Functionally, giardins are involved in parasite attachment to the intestinal mucosa and in the cytoskeletal disassembly and reassembly that marks the transition from infectious trophozoite to transmissible cyst. They may interact with other cytoskeletal proteins such as microtubules in the microribbons or crossbridges, to maintain the integrity of the ventral disk. The protein is Giardin subunit alpha-5 of Giardia intestinalis (Giardia lamblia).